The following is a 312-amino-acid chain: Glyoxylate/hydroxypyruvate reductase A (312 aa).

Arg-227 is a catalytic residue. His-275 functions as the Proton donor in the catalytic mechanism.

This sequence belongs to the D-isomer specific 2-hydroxyacid dehydrogenase family. GhrA subfamily.

It localises to the cytoplasm. It catalyses the reaction glycolate + NADP(+) = glyoxylate + NADPH + H(+). The enzyme catalyses (R)-glycerate + NAD(+) = 3-hydroxypyruvate + NADH + H(+). It carries out the reaction (R)-glycerate + NADP(+) = 3-hydroxypyruvate + NADPH + H(+). Functionally, catalyzes the NADPH-dependent reduction of glyoxylate and hydroxypyruvate into glycolate and glycerate, respectively. This is Glyoxylate/hydroxypyruvate reductase A from Salmonella heidelberg (strain SL476).